Consider the following 369-residue polypeptide: Chromatin modification-related protein EAF3 (369 aa).

One can recognise a Tudor-knot domain in the interval 9–97 (TVYAYHGPLI…WDEWVGIDRI (89 aa)). Disordered stretches follow at residues 43 to 66 (PLEE…IAKF) and 126 to 191 (IIVN…NKSK). The span at 53–62 (NHHHHHHSQH) shows a compositional bias: basic residues. Positions 126–135 (IIVNATTKNH) are enriched in low complexity. Over residues 136–149 (TNNKNKKESNKRKS) the composition is skewed to basic residues. Over residues 150 to 191 (SSATTTSGVTAGTNNNKKQKSASTSTTNNTSGNSGTTSNKSK) the composition is skewed to low complexity. Positions 193–368 (ILSRLNLNFP…TSPQYDSLAR (176 aa)) constitute an MRG domain.

Belongs to the MRG family. As to quaternary structure, component of the NuA4 histone acetyltransferase complex.

The protein localises to the nucleus. In terms of biological role, involved in deacetylation of histones, chromatin assembly and chromosome segregation. May act as a transcriptional oscillator, directing histone deacetylases to specific chromosomal domains. Component of the NuA4 histone acetyltransferase complex which is involved in transcriptional activation of selected genes principally by acetylation of nucleosomal histone H4 and H2A. The NuA4 complex is also involved in DNA repair. This is Chromatin modification-related protein EAF3 (EAF3) from Candida albicans (strain SC5314 / ATCC MYA-2876) (Yeast).